The sequence spans 167 residues: Translation initiation factor IF-3 (167 aa).

It belongs to the IF-3 family. Monomer.

It is found in the cytoplasm. In terms of biological role, IF-3 binds to the 30S ribosomal subunit and shifts the equilibrium between 70S ribosomes and their 50S and 30S subunits in favor of the free subunits, thus enhancing the availability of 30S subunits on which protein synthesis initiation begins. This is Translation initiation factor IF-3 from Bacillus anthracis.